Reading from the N-terminus, the 822-residue chain is Protein smoothened (822 aa).

An N-terminal signal peptide occupies residues 1-28 (MSSKRPCSIVGSFWMLWIWTATSMVARA). The Extracellular portion of the chain corresponds to 29 to 212 (VILHPNETIF…EDEHSDMHSY (184 aa)). The N-linked (GlcNAc...) asparagine glycan is linked to asparagine 34. Cystine bridges form between cysteine 42-cysteine 157, cysteine 48-cysteine 112, cysteine 56-cysteine 105, cysteine 96-cysteine 132, and cysteine 125-cysteine 147. In terms of domain architecture, FZ spans 43–160 (KKSTTCEVLK…EQFPKGCQNE (118 aa)). Aspartate 73 provides a ligand contact to cholesterol. Asparagine 167 carries an N-linked (GlcNAc...) asparagine glycan. 3 cysteine pairs are disulfide-bonded: cysteine 172-cysteine 192, cysteine 196-cysteine 274, and cysteine 293-cysteine 369. A helical transmembrane segment spans residues 213–233 (IAVFGTITLLCTFFTLATFLA). At 234–241 (DWKNSNRY) the chain is on the cytoplasmic side. A helical membrane pass occupies residues 242-262 (PAVILFYVNACFFIGSIGWLA). At 263-293 (QFMDGARNEIVCKSDNTMRLGEPSSTETLSC) the chain is on the extracellular side. A helical membrane pass occupies residues 294–314 (VIIFVIVYYSLMSGVIWFVML). At 315-335 (TYAWHTSFKALGTTHQPLSGK) the chain is on the cytoplasmic side. The helical transmembrane segment at 336–356 (TSYFHLVTWSIPFILTVAILA) threads the bilayer. Residues 357–381 (NSQVDADSVSGICFVGYRYYEYRAG) are Extracellular-facing. Tyrosine 373 is a binding site for cholesterol. A helical membrane pass occupies residues 382-402 (FVLAPIGFVLVIGGYFLIRGV). Residues 403 to 430 (MTLFSIKSNHPGLLSEKAASKINETMLR) are Cytoplasmic-facing. A helical transmembrane segment spans residues 431–451 (LGIFGFLAFGFVLITFGCHFY). The Extracellular portion of the chain corresponds to 452–503 (DFFNQAEWERSFREYVLCEANVTIAHQTNKPIPECAIKNRPSLLVGKINLFS). A disulfide bridge links cysteine 469 with cysteine 486. N-linked (GlcNAc...) asparagine glycosylation is present at asparagine 472. The helical transmembrane segment at 504–524 (MFGTGIAMSTWVWTKATILIW) threads the bilayer. At 525-822 (KRTWFRIIGR…AELLDADSDF (298 aa)) the chain is on the cytoplasmic side. Positions 645–687 (MMKRKKKKKKRRKEVRPAGPAADEGNPAYHRREFGPSAVPRLP) are disordered. Residues 647 to 658 (KRKKKKKKRRKE) show a composition bias toward basic residues.

Belongs to the G-protein coupled receptor Fz/Smo family. Monomer.

The protein resides in the cell membrane. Its subcellular location is the cell projection. It is found in the cilium. G protein-coupled receptor which associates with the patched protein (ptch) to transduce Hedgehog protein signaling. Binding of sonic hedgehog (shh) to its receptor patched prevents inhibition of smoothened (smo) by patched. When active, smo binds to and sequesters protein kinase A catalytic subunit prkaca at the cell membrane, preventing prkaca-mediated phosphorylation of gli transcription factors which releases the gli proteins from prkaca-mediated inhibition and allows for transcriptional activation of Hedgehog signaling pathway target genes. Required for the development of primary and secondary motoneurons but not for the specification of midbrain dopaminergic neurons or development of the medial floor plate. Required for induction of lateral floor plate and posterior motoneurons, anterior neural plate patterning, dorsoventral forebrain patterning, dorsoventral retinal patterning, optic stalk development, and formation of the forebrain primary axonal scaffold. Required to regulate the formation of a subset of cerebellar neurons by limiting wnt1 expression which controls cerebellar expression of transcription factor olig2. Required for development of the pancreas. Required for muscle development. Required for the formation of a single continuous intestinal lumen from multiple discontinuous lumens, probably by regulating remodeling through rab11a-mediated trafficking to facilitate lumen fusion. Required for development of the adenohypophysis. Required for anteroposterior patterning of the otic vesicle. Required for development of the anterior craniofacial skeleton. Required for patterning of the caudal fin. Required during gastrulation and early somitogenesis stages to promote cardiomyocyte formation by regulating the specification of myocardial progenitors. Required for induction of arterial endothelial cell formation by repressing venous cell fate. The sequence is that of Protein smoothened from Danio rerio (Zebrafish).